The following is a 236-amino-acid chain: Small ribosomal subunit protein uS3 (236 aa).

The KH type-2 domain occupies 39-107 (IRKFLKREMY…EVFINIKEAK (69 aa)). The span at 214 to 229 (PEKKEESKSGDKEVRS) shows a compositional bias: basic and acidic residues. Residues 214 to 236 (PEKKEESKSGDKEVRSKSRRGRQ) form a disordered region.

Belongs to the universal ribosomal protein uS3 family. In terms of assembly, part of the 30S ribosomal subunit. Forms a tight complex with proteins S10 and S14.

In terms of biological role, binds the lower part of the 30S subunit head. Binds mRNA in the 70S ribosome, positioning it for translation. This chain is Small ribosomal subunit protein uS3, found in Helicobacter hepaticus (strain ATCC 51449 / 3B1).